Reading from the N-terminus, the 126-residue chain is Glycerol dehydrogenase small subunit (126 aa).

4 helical membrane-spanning segments follow: residues 13-33 (WLTL…VIGG), 41-61 (GSTY…FMLM), 67-87 (AFLY…EVGF), and 92-112 (LLPR…TIPV).

The protein resides in the cell membrane. It catalyses the reaction glycerol + A = dihydroxyacetone + AH2. Catalyzes the oxidation of glycerol to glycerone. Also acts, more slowly, on a number of other polyols including D-sorbitol, D-arabinitol, D-mannitol, meso-erythritol, adonitol and propylene glycol. The polypeptide is Glycerol dehydrogenase small subunit (sldB) (Gluconobacter thailandicus).